We begin with the raw amino-acid sequence, 1690 residues long: DNA-directed RNA polymerase subunit beta' (1690 aa).

Zn(2+) contacts are provided by C63, C65, C78, and C81. 3 residues coordinate Mg(2+): D753, D755, and D757. The Zn(2+) site is built by C1107, C1295, C1302, and C1305.

This sequence belongs to the RNA polymerase beta' chain family. In terms of assembly, the RNAP catalytic core consists of 2 alpha, 1 beta, 1 beta' and 1 omega subunit. When a sigma factor is associated with the core the holoenzyme is formed, which can initiate transcription. Requires Mg(2+) as cofactor. It depends on Zn(2+) as a cofactor.

The catalysed reaction is RNA(n) + a ribonucleoside 5'-triphosphate = RNA(n+1) + diphosphate. Its function is as follows. DNA-dependent RNA polymerase catalyzes the transcription of DNA into RNA using the four ribonucleoside triphosphates as substrates. The chain is DNA-directed RNA polymerase subunit beta' from Thermotoga petrophila (strain ATCC BAA-488 / DSM 13995 / JCM 10881 / RKU-1).